The sequence spans 302 residues: tRNA dimethylallyltransferase (302 aa).

Residue 21 to 28 (GPTASGKS) participates in ATP binding. Residue 23–28 (TASGKS) participates in substrate binding.

It belongs to the IPP transferase family. As to quaternary structure, monomer. Mg(2+) serves as cofactor.

It carries out the reaction adenosine(37) in tRNA + dimethylallyl diphosphate = N(6)-dimethylallyladenosine(37) in tRNA + diphosphate. Catalyzes the transfer of a dimethylallyl group onto the adenine at position 37 in tRNAs that read codons beginning with uridine, leading to the formation of N6-(dimethylallyl)adenosine (i(6)A). In Paracoccus denitrificans (strain Pd 1222), this protein is tRNA dimethylallyltransferase.